A 92-amino-acid polypeptide reads, in one-letter code: Secreted RxLR effector protein RXLR-C02 (92 aa).

The signal sequence occupies residues methionine 1–alanine 21. The short motif at arginine 48–arginine 51 is the RxLR element. The interval glutamate 54 to lysine 75 is disordered.

It belongs to the RxLR effector family.

It localises to the secreted. It is found in the host cytoplasm. The protein resides in the host nucleus. Its function is as follows. Secreted effector that suppresses pattern-triggered immunity (PTI) in plant host. This Plasmopara halstedii (Downy mildew of sunflower) protein is Secreted RxLR effector protein RXLR-C02.